A 498-amino-acid chain; its full sequence is ATP synthase subunit beta, chloroplastic (498 aa).

ATP is bound at residue 172-179; the sequence is GGAGVGKT.

The protein belongs to the ATPase alpha/beta chains family. As to quaternary structure, F-type ATPases have 2 components, CF(1) - the catalytic core - and CF(0) - the membrane proton channel. CF(1) has five subunits: alpha(3), beta(3), gamma(1), delta(1), epsilon(1). CF(0) has four main subunits: a(1), b(1), b'(1) and c(9-12).

It localises to the plastid. The protein localises to the chloroplast thylakoid membrane. It catalyses the reaction ATP + H2O + 4 H(+)(in) = ADP + phosphate + 5 H(+)(out). In terms of biological role, produces ATP from ADP in the presence of a proton gradient across the membrane. The catalytic sites are hosted primarily by the beta subunits. In Chamaerops humilis (Mediterranean fan palm), this protein is ATP synthase subunit beta, chloroplastic.